A 1249-amino-acid polypeptide reads, in one-letter code: Protein lingerer (1249 aa).

The interval 1–66 is disordered; it reads MSTQTRSGGG…VVKAKQPTAE (66 aa). 2 stretches are compositionally biased toward gly residues: residues 7 to 30 and 38 to 50; these read SGGG…GAAG and GSTG…GAGG. The region spanning 84–124 is the UBA domain; the sequence is KIQEKIQSLMETTQRSEEEVCCALQECDSDLDRAVIFLLET. Disordered stretches follow at residues 132–312, 350–375, 454–506, 549–579, 616–717, 738–922, 1016–1042, 1124–1149, 1164–1186, and 1211–1249; these read TTSK…LKPE, SAGA…ASNV, MPPM…PPTT, YAAA…AVEM, TTGT…TSVS, PYGQ…SLPI, GRFT…TGSG, QQQS…APSM, KQSF…AGTT, and QNMH…TGPN. Residues 186-209 show a composition bias toward gly residues; that stretch reads NRGGSGNQRSGGPGRGGRAGGYRD. Over residues 210 to 227 the composition is skewed to basic and acidic residues; it reads GGGDRDRDRDRNGYDKGG. Composition is skewed to gly residues over residues 228 to 240 and 248 to 269; these read EGGG…GGDG and DGPG…GGPR. Positions 350-369 are enriched in low complexity; the sequence is SAGAGAQQQQSQQSTQTGVP. Over residues 457-494 the composition is skewed to polar residues; sequence MNTSSSLSAEQSQYFSTLSSQNSNLQPTPSAVGFQQQP. 3 stretches are compositionally biased toward low complexity: residues 549 to 559, 616 to 639, and 647 to 664; these read YAAAATQQPPV, TTGT…PATV, and QSQL…APQQ. Residues 678–705 show a composition bias toward polar residues; sequence ASSQIMPGQGTTEALSSQNDGLANSYSR. The segment covering 706 to 717 has biased composition (low complexity); the sequence is TNASGSVSTSVS. Polar residues-rich tracts occupy residues 738 to 769 and 777 to 809; these read PYGQ…TASY and GYNN…NVNA. A compositionally biased stretch (low complexity) spans 811 to 861; that stretch reads QPPSSSVTNNVVPNNNTGNSVGGVSNQSNLPVNNNAVNSSSNNNAGGYLSS. The span at 862 to 873 shows a compositional bias: polar residues; sequence QYPVSQTSSAFP. Low complexity-rich tracts occupy residues 874–884, 892–922, and 1023–1034; these read SQQNYQNSSQN, NSNT…SLPI, and NNSSPVSNVPSS. A compositionally biased stretch (polar residues) spans 1124 to 1138; sequence QQQSKGQTVANQQSG. Polar residues predominate over residues 1216-1249; the sequence is DSNSSGQRPQNNNQGKTASKQQGYSASTYWTGPN.

The protein localises to the cytoplasm. In terms of biological role, acts in the nervous system to mediate the control of copulatory organs during courtship. In Anopheles gambiae (African malaria mosquito), this protein is Protein lingerer.